A 226-amino-acid chain; its full sequence is MPKLPRIDFYFDVISPYSYIAFEVFQKLETQWKGVTIRYIPFFLGAVMKESGNRPPAMLPARSIMMMTDLKRTAKFWDIPLTPPPLFMEWIKKYRTTGAMKVLLVLQEQDKELMLRAAREMWVRLWSRSEKIFEDQDFVEVLKAVGVKNPEQIVEKSKDEKYIKILMENTNKGVDLMAYGAPWINVHTEDGSEHSFFGSDRFHLIADLLQQPQPLPDRLFGQKSKL.

Residues 15 to 17, Asn53, and 199 to 200 contribute to the glutathione site; these read SPY and SD.

The protein belongs to the GST superfamily. Kappa family.

The catalysed reaction is RX + glutathione = an S-substituted glutathione + a halide anion + H(+). The polypeptide is Glutathione S-transferase kappa 1 (gstk-1) (Caenorhabditis elegans).